Consider the following 477-residue polypeptide: Glutamyl-tRNA(Gln) amidotransferase subunit A (477 aa).

Active-site charge relay system residues include K71 and S146. Catalysis depends on S170, which acts as the Acyl-ester intermediate.

It belongs to the amidase family. GatA subfamily. In terms of assembly, heterotrimer of A, B and C subunits.

The catalysed reaction is L-glutamyl-tRNA(Gln) + L-glutamine + ATP + H2O = L-glutaminyl-tRNA(Gln) + L-glutamate + ADP + phosphate + H(+). Its function is as follows. Allows the formation of correctly charged Gln-tRNA(Gln) through the transamidation of misacylated Glu-tRNA(Gln) in organisms which lack glutaminyl-tRNA synthetase. The reaction takes place in the presence of glutamine and ATP through an activated gamma-phospho-Glu-tRNA(Gln). This Halothermothrix orenii (strain H 168 / OCM 544 / DSM 9562) protein is Glutamyl-tRNA(Gln) amidotransferase subunit A.